The following is a 286-amino-acid chain: Expansin-B4 (286 aa).

Residues 1–24 form the signal peptide; it reads MGSLSSLAAAAVFLSLLAVGHCAA. 2 N-linked (GlcNAc...) asparagine glycosylation sites follow: Asn-28 and Asn-44. One can recognise an Expansin-like EG45 domain in the interval 75 to 181; the sequence is GGACGFKHTN…TRVPCEFPGL (107 aa). 3 disulfide bridges follow: Cys-78–Cys-106, Cys-109–Cys-176, and Cys-114–Cys-120. The 88-residue stretch at 194–281 folds into the Expansin-like CBD domain; that stretch reads VYFAVLVEYE…NWRPNTFYRS (88 aa). The N-linked (GlcNAc...) asparagine glycan is linked to Asn-257.

This sequence belongs to the expansin family. Expansin B subfamily. As to expression, expressed in internodes.

Its subcellular location is the secreted. It is found in the cell wall. It localises to the membrane. In terms of biological role, may cause loosening and extension of plant cell walls by disrupting non-covalent bonding between cellulose microfibrils and matrix glucans. No enzymatic activity has been found. May be required for rapid internodal elongation in deepwater rice during submergence. This is Expansin-B4 (EXPB4) from Oryza sativa subsp. japonica (Rice).